A 311-amino-acid polypeptide reads, in one-letter code: Heme A synthase (311 aa).

The Cytoplasmic segment spans residues 1 to 6 (MQRFIK). Residues 7 to 27 (WLAVITSLDLLIVLLGGALVT) traverse the membrane as a helical segment. Topologically, residues 28 to 62 (KTGSGQGCGKSWPLCNGEFVPSNLSMETIIELSHR) are extracellular. The cysteines at positions 35 and 42 are disulfide-linked. The active site involves Glu-58. Position 61 (His-61) interacts with heme o. The chain crosses the membrane as a helical span at residues 63–83 (LTSGSAGILVTLLCILSWKYY). Topologically, residues 84–91 (KHVRETKT) are cytoplasmic. Residues 92–112 (LAILSFVFLVAQALMGAAAVV) traverse the membrane as a helical segment. The Extracellular portion of the chain corresponds to 113-121 (WGQMPAVLA). A helical transmembrane segment spans residues 122–142 (IHFGISLISFASVILLTCLIF). His-123 contacts heme o. Over 143 to 159 (EIDQKFDARSLIMDKKM) the chain is Cytoplasmic. A helical membrane pass occupies residues 160–180 (KFHIYGVTIYSYIVVYTGALV). At 181–211 (RHERASLACPDFPLCSKNRPMPTQLHEWVQM) the chain is on the extracellular side. Cysteines 189 and 195 form a disulfide. The helical transmembrane segment at 212–232 (GHRVAAMLIFAWILYAMILAI) threads the bilayer. Heme b is bound at residue His-213. The Cytoplasmic segment spans residues 233–243 (RHYKQQPVVYW). A helical transmembrane segment spans residues 244 to 264 (GWIISFILVTLQAIVGILVVF). Residues 265 to 271 (TNASLSM) are Extracellular-facing. The chain crosses the membrane as a helical span at residues 272–292 (ALLHSLFISCLFAVLCYLVML). His-275 contributes to the heme b binding site. Topologically, residues 293 to 311 (GTRSKVNAKEAASTSKQTK) are cytoplasmic.

The protein belongs to the COX15/CtaA family. Type 1 subfamily. Interacts with CtaB. Heme b is required as a cofactor.

It localises to the cell membrane. It carries out the reaction Fe(II)-heme o + 2 A + H2O = Fe(II)-heme a + 2 AH2. The protein operates within porphyrin-containing compound metabolism; heme A biosynthesis; heme A from heme O: step 1/1. In terms of biological role, catalyzes the conversion of heme O to heme A by two successive hydroxylations of the methyl group at C8. The first hydroxylation forms heme I, the second hydroxylation results in an unstable dihydroxymethyl group, which spontaneously dehydrates, resulting in the formyl group of heme A. The sequence is that of Heme A synthase from Bacillus cereus (strain ATCC 10987 / NRS 248).